The chain runs to 223 residues: Mating-type protein ALPHA2 (223 aa).

The homeobox; TALE-type DNA-binding region spans 151–213 (EFKKGKRFLK…NRRRKDKITE (63 aa)).

This sequence belongs to the TALE/M-ATYP homeobox family. In terms of assembly, forms a heterodimer with A1.

It localises to the nucleus. In terms of biological role, mating type proteins are sequence specific DNA-binding proteins that act as master switches in yeast differentiation by controlling gene expression in a cell type-specific fashion. Transcriptional corepressor that acts in conjunction with A1 to repress transcription of haploid-specific genes. The chain is Mating-type protein ALPHA2 (HMLALPHA2) from Kluyveromyces lactis (strain ATCC 8585 / CBS 2359 / DSM 70799 / NBRC 1267 / NRRL Y-1140 / WM37) (Yeast).